Reading from the N-terminus, the 149-residue chain is Macrodomain Ter protein (149 aa).

The protein belongs to the MatP family. As to quaternary structure, homodimer.

It is found in the cytoplasm. Its function is as follows. Required for spatial organization of the terminus region of the chromosome (Ter macrodomain) during the cell cycle. Prevents early segregation of duplicated Ter macrodomains during cell division. Binds specifically to matS, which is a 13 bp signature motif repeated within the Ter macrodomain. This is Macrodomain Ter protein from Vibrio vulnificus (strain YJ016).